The sequence spans 321 residues: Mas-related G-protein coupled receptor member H (321 aa).

The Extracellular segment spans residues 1 to 35; the sequence is MEPLATTLCPQECTQTTRNETPNETTWSSEHVTKY. N-linked (GlcNAc...) asparagine glycosylation occurs at Asn23. Residues 36–56 traverse the membrane as a helical segment; the sequence is TYISISLVICSLGLVGNGLLI. Residues 57-71 lie on the Cytoplasmic side of the membrane; it reads WFLIFCIKRKPFTIY. Residues 72–92 form a helical membrane-spanning segment; it reads ILHLAFADFMVLLCSSIIQLV. The Extracellular segment spans residues 93–102; that stretch reads NTFHIYDSTL. The helical transmembrane segment at 103–126 threads the bilayer; it reads VSYAVLFMIFGYNTGLHLLTAISV. Topologically, residues 127–147 are cytoplasmic; sequence ERCLSVLYPIWYHCRRPKHQS. The chain crosses the membrane as a helical span at residues 148–168; that stretch reads TVACTLLWALSVLVSGLENFF. At 169-188 the chain is on the extracellular side; sequence CILEVKPQFPECRYVYIFSC. The chain crosses the membrane as a helical span at residues 189–209; sequence TLTFLVFVPLMVFSNLILFIQ. Residues 210-225 lie on the Cytoplasmic side of the membrane; sequence VCCNLKPRQPAKLYVI. Residues 226–246 form a helical membrane-spanning segment; it reads IMATVILFLVFAMPMKVLLII. A topological domain (extracellular) is located at residue Gly247. Residues 248–271 traverse the membrane as a helical segment; that stretch reads YYSNSTDASVWKSLPYLNMLSTIN. Over 272 to 320 the chain is Cytoplasmic; it reads CSINPIVYFVVGSLRRKRSRKSLKEALQKVFEEKPVVASRENEVQFSLP.

Belongs to the G-protein coupled receptor 1 family. Mas subfamily.

It is found in the cell membrane. Orphan receptor. May regulate nociceptor function and/or development, including the sensation or modulation of pain. The polypeptide is Mas-related G-protein coupled receptor member H (Mrgprh) (Rattus norvegicus (Rat)).